The primary structure comprises 677 residues: Zinc finger and BTB domain-containing protein 5 (677 aa).

The BTB domain maps to 24 to 93 (CDCVIVVGNR…MYTSTLMLGE (70 aa)). A compositionally biased stretch (polar residues) spans 158–181 (LNSSQNGEEQPAPMSSSMRSNLDQ). Disordered regions lie at residues 158 to 252 (LNSS…MTDN) and 287 to 312 (SMASRATQVETSFDQEAAPEKSSFQC). Ser234 is modified (phosphoserine). Residue Lys239 forms a Glycyl lysine isopeptide (Lys-Gly) (interchain with G-Cter in SUMO2) linkage. The segment covering 287-300 (SMASRATQVETSFD) has biased composition (polar residues). Glycyl lysine isopeptide (Lys-Gly) (interchain with G-Cter in SUMO2) cross-links involve residues Lys322 and Lys330. Residues 331-387 (SEPLSSPEPQDEVSDVTSQAEGSESVEVEGVVVSAEKIDLSPESSDRSFSDPQSSTD) are disordered. Residues 350–365 (AEGSESVEVEGVVVSA) are compositionally biased toward low complexity. A compositionally biased stretch (basic and acidic residues) spans 366-379 (EKIDLSPESSDRSF). The residue at position 371 (Ser371) is a Phosphoserine. Residues Lys404 and Lys415 each participate in a glycyl lysine isopeptide (Lys-Gly) (interchain with G-Cter in SUMO2) cross-link. Residues 447–474 (LLSPEAGPAGGPSSAPGSHVENPFSEPA) are disordered. Residues 449–464 (SPEAGPAGGPSSAPGS) are compositionally biased toward low complexity. A Glycyl lysine isopeptide (Lys-Gly) (interchain with G-Cter in SUMO2) cross-link involves residue Lys541. Residues 552 to 576 (QIPENSTSSQLMMNGATSSFENGHP) are compositionally biased toward polar residues. The segment at 552–585 (QIPENSTSSQLMMNGATSSFENGHPSQPGPPQLT) is disordered. Residues Lys594 and Lys597 each participate in a glycyl lysine isopeptide (Lys-Gly) (interchain with G-Cter in SUMO2) cross-link. The segment at 613 to 635 (YACKICCKTFLTLTDCKKHIRVH) adopts a C2H2-type 1 zinc-finger fold. The segment at 641–664 (YACLKCGKRFSQSSHLYKHSKTTC) adopts a C2H2-type 2; atypical zinc-finger fold. Residues Lys645 and Lys658 each participate in a glycyl lysine isopeptide (Lys-Gly) (interchain with G-Cter in SUMO2) cross-link.

It is found in the nucleus. May be involved in transcriptional regulation. The chain is Zinc finger and BTB domain-containing protein 5 (ZBTB5) from Homo sapiens (Human).